We begin with the raw amino-acid sequence, 196 residues long: uncharacterized protein (196 aa).

Positions M1–P10 are enriched in pro residues. Disordered stretches follow at residues M1 to G118 and T176 to G196. Low complexity predominate over residues P25–S45. Residues L54–N69 show a composition bias toward polar residues.

This is an uncharacterized protein from Homo sapiens (Human).